We begin with the raw amino-acid sequence, 29 residues long: Snaclec multactivase regulatory subunit (29 aa).

One can recognise a C-type lectin domain in the interval 1–29 (DCLPGWSVYEGRCYKVFNQKTWKAAEKFC). A disulfide bond links C2 and C13.

The protein belongs to the snaclec family. In terms of assembly, heterodimer of a metalloproteinase subunit and a regulatory subunit comprising two homologous polypeptides disulfide-linked. Expressed by the venom gland.

It localises to the secreted. Its function is as follows. Multactivase, a carinactivase-like calcium-dependent prothrombin activator, activates prothrombin via recognition of the calcium ion bound conformation of its gamma-carboxyglutamic acid (GLA) domain, and the subsequent conversion of prothrombin to active thrombin is catalyzed by the catalytic subunit. The sequence is that of Snaclec multactivase regulatory subunit from Echis multisquamatus (Central Asian sand viper).